The primary structure comprises 806 residues: Integrin beta-7 (806 aa).

Residues 1–19 (MVDSSTVLIFLLVLGGGQS) form the signal peptide. Residues 20-724 (ELDTKITSSG…PQEKGVDHTR (705 aa)) are Extracellular-facing. Positions 44–92 (SCQPVPSCQKCILSHPSCAWCKQLNFTASGEAEARRCARREELLARGCP) constitute a PSI domain. Disulfide bonds link C51–C476, C54–C80, C64–C91, C216–C223, C271–C311, C412–C428, C448–C474, C478–C497, C488–C500, C502–C511, C513–C545, C527–C543, C537–C548, C550–C559, C561–C582, C566–C580, C574–C585, C587–C596, C598–C621, C605–C619, C613–C624, C626–C635, C638–C641, C645–C688, C651–C670, and C654–C666. The N-linked (GlcNAc...) asparagine glycan is linked to N68. A compositionally biased stretch (basic and acidic residues) spans 98–107 (EPRGRQEVLQ). Residues 98-123 (EPRGRQEVLQDKPLSQGDRGEGATQL) are disordered. One can recognise a VWFA domain in the interval 150-389 (YPVDLYYLMD…QLIMDAYDSL (240 aa)). Mg(2+) contacts are provided by S161 and S163. Residues S163, D166, D167, and D198 each coordinate Ca(2+). N250 is a glycosylation site (N-linked (GlcNAc...) asparagine). Ca(2+) contacts are provided by N254, D256, P258, and E259. E259 provides a ligand contact to Mg(2+). N279 carries an N-linked (GlcNAc...) asparagine glycan. 2 residues coordinate Ca(2+): D289 and E373. Residue N434 is glycosylated (N-linked (GlcNAc...) asparagine). 4 I-EGF domains span residues 478–512 (CGDAQPHAPYCSDGQGDLQCGICSCAPGRLGQLCE), 513–560 (CSEA…RLCE), 561–597 (CDDASCERHEGILCGGFGHCQCGVCHCHANHTGRACE), and 598–636 (CSKSVDSCVSPEGGLCSGHGYCKCNRCQCLDGYYGALCD). Residue N531 is glycosylated (N-linked (GlcNAc...) asparagine). Residue N590 is glycosylated (N-linked (GlcNAc...) asparagine). N-linked (GlcNAc...) asparagine glycans are attached at residues N665 and N674. Residues 725-745 (AIILGCTGGIVAVGLGLVLAY) form a helical membrane-spanning segment. Over 746-806 (RLSVEIYDRR…PSLSLTREAD (61 aa)) the chain is Cytoplasmic. Residues 786–806 (NPRFQGTNGRSPSLSLTREAD) are disordered.

The protein belongs to the integrin beta chain family. In terms of assembly, heterodimer of an alpha and a beta subunit. ITGB7/beta-7 associates with either ITGA4/alpha-4 or ITGAE/alpha-E. Integrin ITGA4/ITGB7 interacts with MADCAM1. Integrin ITGA4/ITGB7 interacts with VCAM1 and fibronectin. Interacts with FLNA (via filamin repeats 4, 9, 12, 17, 19, 21, and 23).

The protein resides in the cell membrane. Functionally, integrin ITGA4/ITGB7 (alpha-4/beta-7) (Peyer patches-specific homing receptor LPAM-1) is an adhesion molecule that mediates lymphocyte migration and homing to gut-associated lymphoid tissue (GALT). Integrin ITGA4/ITGB7 interacts with the cell surface adhesion molecules MADCAM1 which is normally expressed by the vascular endothelium of the gastrointestinal tract. Also interacts with VCAM1 and fibronectin, an extracellular matrix component. It recognizes one or more domains within the alternatively spliced CS-1 region of fibronectin. Interactions involve the tripeptide L-D-T in MADCAM1, and L-D-V in fibronectin. Integrin ITGAE/ITGB7 (alpha-E/beta-7, HML-1) is a receptor for E-cadherin. This Mus musculus (Mouse) protein is Integrin beta-7 (Itgb7).